A 77-amino-acid chain; its full sequence is Large ribosomal subunit protein bL31 (77 aa).

It belongs to the bacterial ribosomal protein bL31 family. Type A subfamily. As to quaternary structure, part of the 50S ribosomal subunit.

In terms of biological role, binds the 23S rRNA. This Synechococcus elongatus (strain ATCC 33912 / PCC 7942 / FACHB-805) (Anacystis nidulans R2) protein is Large ribosomal subunit protein bL31.